A 144-amino-acid polypeptide reads, in one-letter code: uncharacterized protein (144 aa).

Residues 98–127 form a disordered region; that stretch reads PLADGATVDSQASENGEKEAQPTPPKEGLL.

This is an uncharacterized protein from Aedes vexans (Inland floodwater mosquito).